The chain runs to 392 residues: Speckle-type POZ protein-like (392 aa).

Positions 31 to 161 (KFSYMWTINN…DDKLTLFCEV (131 aa)) constitute an MATH domain. In terms of domain architecture, BTB spans 200 to 267 (TDCCFFVRGK…VYTGKAPNLD (68 aa)).

This sequence belongs to the Tdpoz family. Homodimer. Heterodimer with SPOP. Component of cullin-RING-based BCR (BTB-CUL3-RBX1) E3 ubiquitin-protein ligase complexes containing homodimeric SPOPL or the heterodimer formed by SPOP and SPOPL. Interacts with CUL3 and MACROH2A1.

The protein resides in the nucleus. It participates in protein modification; protein ubiquitination. Its function is as follows. Component of a cullin-RING-based BCR (BTB-CUL3-RBX1) E3 ubiquitin-protein ligase complex that mediates the ubiquitination and subsequent proteasomal degradation of target proteins, but with relatively low efficiency. Cullin-RING-based BCR (BTB-CUL3-RBX1) E3 ubiquitin-protein ligase complexes containing homodimeric SPOPL or the heterodimer formed by SPOP and SPOPL are less efficient than ubiquitin ligase complexes containing only SPOP. May function to down-regulate the activity of cullin-RING-based BCR (BTB-CUL3-RBX1) E3 ubiquitin-protein ligase complexes that contain SPOP. This chain is Speckle-type POZ protein-like (Spopl), found in Mus musculus (Mouse).